The sequence spans 418 residues: MAAPAKGMWCSLGSLLRVVQTRDLNARRWVRALRRSPVRVLSPSGQVEERKRAPDQQPRKAVPKASSQGQRQKQPLETSPSQTPHTWEEAGLRYDKAFPGDRRLSSVMTIVKSRPFREKQGKILLEGRRLIADALKAGAVPKAFFFSRLEYVKELPVDKLKDVSLIKVKFEDIKDWSDLVTPQGIMGIFAKPDPVKMTYPETPLHHTLPLVLICDNLRDPGNLGTILRSAAGAGCSKVLLTKGCVDAWEPKVLRAGMGAHFQVPIVNNVEWETVPNHLPPDTRVYVADNCGHYAQVQMSDKTGDRDWACDRRFLKFHKYEEDLDTKTRKDWLPKLEVQSYDLDWTGAPAAVVIGGETHGVSLESLQLAESTGGKRLLIPVVPGVDSLNSAMAASILLFEGKRQLRIKVEDLSRDRSYH.

The N-terminal 40 residues, 1 to 40 (MAAPAKGMWCSLGSLLRVVQTRDLNARRWVRALRRSPVRV), are a transit peptide targeting the mitochondrion. Residues 41-90 (LSPSGQVEERKRAPDQQPRKAVPKASSQGQRQKQPLETSPSQTPHTWEEA) form a disordered region. A compositionally biased stretch (basic and acidic residues) spans 47–58 (VEERKRAPDQQP). A compositionally biased stretch (polar residues) spans 65–85 (ASSQGQRQKQPLETSPSQTPH). S-adenosyl-L-methionine is bound by residues glycine 354, isoleucine 378, and leucine 387.

The protein belongs to the class IV-like SAM-binding methyltransferase superfamily. RNA methyltransferase TrmH family.

The protein resides in the mitochondrion. It carries out the reaction guanosine(1370) in 16S rRNA + S-adenosyl-L-methionine = 2'-O-methylguanosine(1370) in 16S rRNA + S-adenosyl-L-homocysteine + H(+). S-adenosyl-L-methionine-dependent 2'-O-ribose methyltransferase that catalyzes the formation of 2'-O-methylguanosine at position 1370 (Gm1370) in the 16S mitochondrial large subunit ribosomal RNA (mtLSU rRNA), a conserved modification in the peptidyl transferase domain of the mtLSU rRNA. Also required for formation of 2'-O-methyluridine at position 1369 (Um1369) mediated by MRM2. The polypeptide is rRNA methyltransferase 3, mitochondrial (Mus musculus (Mouse)).